The primary structure comprises 1093 residues: Phosphorylase b kinase regulatory subunit beta (1093 aa).

Ala-2 is modified (N-acetylalanine). Ala-4 is subject to Phosphoserine. The tract at residues 7-29 is calmodulin-binding; the sequence is LTAEVSWKVLERRARTKRSGSVY. Position 12 is a phosphoserine; by autocatalysis (Ser-12). Phosphoserine occurs at positions 27 and 701. The disordered stretch occupies residues 689–716; sequence EPPKHSKVKRQSSTPSAPELGQQPDVNI. Calmodulin-binding regions lie at residues 768 to 795 and 920 to 951; these read RVYR…FSSS and NGRC…ILER. Cys-1090 carries the S-farnesyl cysteine lipid modification.

This sequence belongs to the phosphorylase b kinase regulatory chain family. In terms of assembly, hexadecamer of 4 heterotetramers, each composed of alpha, beta, gamma, and delta subunits. Alpha (PHKA1 or PHKA2) and beta (PHKB) are regulatory subunits, gamma (PHKG1 or PHKG2) is the catalytic subunit, and delta is calmodulin. Post-translationally, ser-701 is probably phosphorylated by PKA. In terms of processing, although the final Cys may be farnesylated, the terminal tripeptide is probably not removed, and the C-terminus is not methylated.

Its subcellular location is the cell membrane. Its pathway is glycan biosynthesis; glycogen metabolism. By phosphorylation of various serine residues. Phosphorylase b kinase catalyzes the phosphorylation of serine in certain substrates, including troponin I. The beta chain acts as a regulatory unit and modulates the activity of the holoenzyme in response to phosphorylation. The protein is Phosphorylase b kinase regulatory subunit beta (PHKB) of Homo sapiens (Human).